The chain runs to 31 residues: Cytochrome b6-f complex subunit 6 (31 aa).

A helical transmembrane segment spans residues 4–26 (LTSYFGFLLAALTITSALFIGLS).

This sequence belongs to the PetL family. The 4 large subunits of the cytochrome b6-f complex are cytochrome b6, subunit IV (17 kDa polypeptide, PetD), cytochrome f and the Rieske protein, while the 4 small subunits are PetG, PetL, PetM and PetN. The complex functions as a dimer.

Its subcellular location is the plastid. It localises to the chloroplast thylakoid membrane. Its function is as follows. Component of the cytochrome b6-f complex, which mediates electron transfer between photosystem II (PSII) and photosystem I (PSI), cyclic electron flow around PSI, and state transitions. PetL is important for photoautotrophic growth as well as for electron transfer efficiency and stability of the cytochrome b6-f complex. This is Cytochrome b6-f complex subunit 6 from Aethionema cordifolium (Lebanon stonecress).